The following is a 38-amino-acid chain: Large ribosomal subunit protein bL36 (38 aa).

This sequence belongs to the bacterial ribosomal protein bL36 family.

This is Large ribosomal subunit protein bL36 from Lactobacillus johnsonii (strain CNCM I-12250 / La1 / NCC 533).